The chain runs to 196 residues: Large ribosomal subunit protein eL15 (196 aa).

The segment covering R162–R172 has biased composition (basic residues). The interval R162–S196 is disordered.

The protein belongs to the eukaryotic ribosomal protein eL15 family.

The polypeptide is Large ribosomal subunit protein eL15 (Halobacterium salinarum (strain ATCC 29341 / DSM 671 / R1)).